We begin with the raw amino-acid sequence, 303 residues long: Ribosomal RNA small subunit methyltransferase A (303 aa).

Positions 37, 39, 64, 85, 115, and 138 each coordinate S-adenosyl-L-methionine.

The protein belongs to the class I-like SAM-binding methyltransferase superfamily. rRNA adenine N(6)-methyltransferase family. RsmA subfamily.

The protein resides in the cytoplasm. It catalyses the reaction adenosine(1518)/adenosine(1519) in 16S rRNA + 4 S-adenosyl-L-methionine = N(6)-dimethyladenosine(1518)/N(6)-dimethyladenosine(1519) in 16S rRNA + 4 S-adenosyl-L-homocysteine + 4 H(+). Its function is as follows. Specifically dimethylates two adjacent adenosines (A1518 and A1519) in the loop of a conserved hairpin near the 3'-end of 16S rRNA in the 30S particle. May play a critical role in biogenesis of 30S subunits. This is Ribosomal RNA small subunit methyltransferase A from Bifidobacterium adolescentis (strain ATCC 15703 / DSM 20083 / NCTC 11814 / E194a).